The sequence spans 1067 residues: FHIP family protein GL19323 (1067 aa).

Polar residues predominate over residues 1–11 (MSWLRSSPLRQ). Disordered regions lie at residues 1–31 (MSWL…GSLR), 503–525 (LARP…QPIQ), and 832–1013 (NENS…SEPA). 2 positions are modified to phosphoserine: serine 508 and serine 835. Residues 842-858 (QPQTTLSQQQQQQQGQQ) are compositionally biased toward low complexity. Over residues 859–878 (RSAYATLSAATPVQATQTSA) the composition is skewed to polar residues. The span at 893-904 (SKSISSMFSRRS) shows a compositional bias: low complexity. Polar residues predominate over residues 918–949 (LVGNNNSGSGQSQPFSSTGTGTCETSLSTNPQ). Over residues 950 to 979 (SGAAAARSTGTATTANGNSSNSNISIGGST) the composition is skewed to low complexity. Residues 980–996 (QTLSGHSNTTTYSSSTL) are compositionally biased toward polar residues.

Belongs to the FHIP family.

The polypeptide is FHIP family protein GL19323 (Drosophila persimilis (Fruit fly)).